Reading from the N-terminus, the 148-residue chain is Phosphoribosyl-AMP cyclohydrolase (148 aa).

Position 91 (Asp91) interacts with Mg(2+). A Zn(2+)-binding site is contributed by Cys92. Mg(2+) is bound by residues Asp93 and Asp95. Residues Cys109 and Cys116 each contribute to the Zn(2+) site.

This sequence belongs to the PRA-CH family. As to quaternary structure, homodimer. Mg(2+) is required as a cofactor. It depends on Zn(2+) as a cofactor.

The protein resides in the cytoplasm. The catalysed reaction is 1-(5-phospho-beta-D-ribosyl)-5'-AMP + H2O = 1-(5-phospho-beta-D-ribosyl)-5-[(5-phospho-beta-D-ribosylamino)methylideneamino]imidazole-4-carboxamide. Its pathway is amino-acid biosynthesis; L-histidine biosynthesis; L-histidine from 5-phospho-alpha-D-ribose 1-diphosphate: step 3/9. Functionally, catalyzes the hydrolysis of the adenine ring of phosphoribosyl-AMP. The chain is Phosphoribosyl-AMP cyclohydrolase from Rhodopseudomonas palustris (strain HaA2).